The chain runs to 197 residues: Small ribosomal subunit protein uS4B (197 aa).

Residues 88 to 150 (SRLDNMVYRM…SRKTEMFVNN (63 aa)) form the S4 RNA-binding domain.

This sequence belongs to the universal ribosomal protein uS4 family. As to quaternary structure, part of the 30S ribosomal subunit. Contacts protein S5. The interaction surface between S4 and S5 is involved in control of translational fidelity.

Its function is as follows. One of the primary rRNA binding proteins, it binds directly to 16S rRNA where it nucleates assembly of the body of the 30S subunit. Functionally, with S5 and S12 plays an important role in translational accuracy. The sequence is that of Small ribosomal subunit protein uS4B from Clostridium perfringens (strain SM101 / Type A).